Consider the following 713-residue polypeptide: Topoisomerase subunit TopoM (713 aa).

The 464-residue stretch at 41 to 504 (IPSAYDGLKP…DATPVSRGDE (464 aa)) folds into the Topo IIA-type catalytic domain. The active-site O-(5'-phospho-DNA)-tyrosine intermediate is the tyrosine 128. A disordered region spans residues 694–713 (NRAKASIKGSGADVTPAPAE).

The protein belongs to the type II topoisomerase GyrA/ParC subunit family. A complex of TopoN and TopoM, possibly a heterotetramer. Requires Mg(2+) as cofactor.

It carries out the reaction ATP-dependent breakage, passage and rejoining of double-stranded DNA.. With respect to regulation, inhibited by quinolone antibiotic ciprofloxacin and coumarin antibiotic novobiocin, but at much higher concentrations than is usual for DNA gyrase/topoisomerase. In terms of biological role, catalyzes the relaxation of negatively supercoiled DNA in the presence of ATP or dATP but not other nucleotides. Individual subunits have no activity. Not able to negatively supercoil DNA, it can however introduce positive supercoils in DNA. Relaxes positive supercoils in an ATP-dependent manner. Catenates and decatenates DNA. Generates dsDNA breaks in the presence of the quinolone antibiotic ciprofloxacin, showing it is a topoisomerase. The protein is Topoisomerase subunit TopoM of Mycolicibacterium smegmatis (strain ATCC 700084 / mc(2)155) (Mycobacterium smegmatis).